The following is a 96-amino-acid chain: ATP synthase subunit f, mitochondrial (96 aa).

This sequence belongs to the ATPase F chain family.

Its subcellular location is the mitochondrion. The protein resides in the mitochondrion inner membrane. Functionally, mitochondrial membrane ATP synthase (F(1)F(0) ATP synthase or Complex V) produces ATP from ADP in the presence of a proton gradient across the membrane which is generated by electron transport complexes of the respiratory chain. F-type ATPases consist of two structural domains, F(1) - containing the extramembraneous catalytic core and F(0) - containing the membrane proton channel, linked together by a central stalk and a peripheral stalk. During catalysis, ATP synthesis in the catalytic domain of F(1) is coupled via a rotary mechanism of the central stalk subunits to proton translocation. In Schizosaccharomyces pombe (strain 972 / ATCC 24843) (Fission yeast), this protein is ATP synthase subunit f, mitochondrial (atp17).